A 505-amino-acid polypeptide reads, in one-letter code: UDP-N-acetylglucosamine diphosphorylase 1 (505 aa).

Basic and acidic residues predominate over residues 1–10 (MIEPSMEREN). A disordered region spans residues 1–32 (MIEPSMERENGALTAATTTTTAVTSPPPMASS). The span at 14 to 24 (TAATTTTTAVT) shows a compositional bias: low complexity. The short motif at 134–137 (LSGG) is the Substrate binding element. N253 is a substrate binding site. The short motif at 335 to 336 (EY) is the Substrate binding element. K432 is a binding site for substrate.

Belongs to the UDPGP type 1 family. In terms of assembly, monomer. Mg(2+) is required as a cofactor. The cofactor is Mn(2+). Expressed in root tips, stipules and mature pollen grains.

It carries out the reaction N-acetyl-alpha-D-glucosamine 1-phosphate + UTP + H(+) = UDP-N-acetyl-alpha-D-glucosamine + diphosphate. The enzyme catalyses N-acetyl-alpha-D-galactosamine 1-phosphate + UTP + H(+) = UDP-N-acetyl-alpha-D-galactosamine + diphosphate. The protein operates within nucleotide-sugar biosynthesis; UDP-N-acetyl-alpha-D-glucosamine biosynthesis; UDP-N-acetyl-alpha-D-glucosamine from N-acetyl-alpha-D-glucosamine 1-phosphate: step 1/1. With respect to regulation, inhibited by hygromycin and streptomycin, but not by gentamycin or kanamycin. Its function is as follows. Uridylyltransferase involved in the biosynthesis of UDP-glucosamine, an essential precursor for glycoprotein and glycolipid synthesis. Can use both UDP-glucosamine and the 4-epimer UDP-galactosamine as substrates, but no other sugars or NTPs. Acts redundantly with GLCNAC1PUT2. Required for gametogenesis and embryo development. The polypeptide is UDP-N-acetylglucosamine diphosphorylase 1 (GLCNAC1PUT1) (Arabidopsis thaliana (Mouse-ear cress)).